Reading from the N-terminus, the 568-residue chain is MTVSTFNRTWAKVIVNALLRYGVKHFCIAPGSRSTPLTLEALQLQQNQQAQCHSHFDERGLGFFALGIAKVTNDPVAIIVTSGTAVANLYPAIIEASLTHHKLIVLSADRPPELIGCGANQAIPQQGIFADYPIAGVNLPKPAEHYNAGWLVATIEQACITQSQQGGVVHINAPFAEPLYEADENAINTHPWLKPIQSWLINPQTKWINSQTIQSEVSMHENWDYWRTKRGVIVVGKLPVEQGIGIKAWAETLGWCLITDVQSCVDANLPYADIWLSNNTVHQRLLQADIVIQFGGQIVSKRVNKFLEAFKGEFWQVDEYSDYLNPFAHHQTRFVAKAHHFLRVHPPLRQKPWLLEPLALSQFCAGFIEQQVGGSLNEASLAHHIEEVLATSGNLFIGNSLFVRLVDALCKLPEGYPVYTNRGASGIDGLIATMAGVAKGSGQPTVGIIGDISALHDLNSVSLLNKISHPCILFVINNSGGAIFDMLPVEAQAKEQFYRLSHNYEFAPIATMFGIEYIRPFTWADLKAKLKLAYGRKGVTIVEIKVNDQDGSNLYKSLVKQISQAEIA.

It belongs to the TPP enzyme family. MenD subfamily. In terms of assembly, homodimer. Requires Mg(2+) as cofactor. It depends on Mn(2+) as a cofactor. The cofactor is thiamine diphosphate.

It catalyses the reaction isochorismate + 2-oxoglutarate + H(+) = 5-enolpyruvoyl-6-hydroxy-2-succinyl-cyclohex-3-ene-1-carboxylate + CO2. It functions in the pathway quinol/quinone metabolism; 1,4-dihydroxy-2-naphthoate biosynthesis; 1,4-dihydroxy-2-naphthoate from chorismate: step 2/7. It participates in quinol/quinone metabolism; menaquinone biosynthesis. Functionally, catalyzes the thiamine diphosphate-dependent decarboxylation of 2-oxoglutarate and the subsequent addition of the resulting succinic semialdehyde-thiamine pyrophosphate anion to isochorismate to yield 2-succinyl-5-enolpyruvyl-6-hydroxy-3-cyclohexene-1-carboxylate (SEPHCHC). The chain is 2-succinyl-5-enolpyruvyl-6-hydroxy-3-cyclohexene-1-carboxylate synthase from Actinobacillus pleuropneumoniae serotype 3 (strain JL03).